We begin with the raw amino-acid sequence, 123 residues long: uncharacterized protein (123 aa).

This is an uncharacterized protein from Shigella boydii serotype 4 (strain Sb227).